We begin with the raw amino-acid sequence, 79 residues long: Succinate dehydrogenase assembly factor 1, mitochondrial (79 aa).

Belongs to the complex I LYR family. SDHAF1 subfamily. In terms of assembly, interacts with SDH2 within an SDH1-SDH2 subcomplex.

The protein localises to the mitochondrion matrix. In terms of biological role, plays an essential role in the assembly of succinate dehydrogenase (SDH), an enzyme complex (also referred to as respiratory complex II) that is a component of both the tricarboxylic acid (TCA) cycle and the mitochondrial electron transport chain, and which couples the oxidation of succinate to fumarate with the reduction of ubiquinone (coenzyme Q) to ubiquinol. Promotes maturation of the iron-sulfur protein subunit SDH2 of the SDH catalytic dimer, protecting it from the deleterious effects of oxidants. Acts together with SDHAF3 (SDH7). The chain is Succinate dehydrogenase assembly factor 1, mitochondrial from Saccharomyces cerevisiae (strain YJM789) (Baker's yeast).